The following is a 189-amino-acid chain: Insecticyanin-A (189 aa).

Cystine bridges form between cysteine 9/cysteine 119 and cysteine 43/cysteine 175.

Belongs to the calycin superfamily. Lipocalin family. As to quaternary structure, homotetramer. As to expression, synthesized only in the caterpillars, apparently by the epidermis and secreted into the hemolymph. The protein is passed over from the larval hemolymph to that of pupae and adults and is sequestered in the eggs.

The protein resides in the secreted. In terms of biological role, this protein binds a chromophore: biliverdin IX, isomer gamma. Mixed with lipoprotein-bound carotenes, this blue protein provides hornworms with their green cryptic coloration which serves a camouflage. The chain is Insecticyanin-A (INSA) from Manduca sexta (Tobacco hawkmoth).